A 425-amino-acid chain; its full sequence is UPF0761 membrane protein XC_3370 (425 aa).

Helical transmembrane passes span 48–68 (VFALVPLAIVVFGVLSAFPAF), 105–125 (FTVAGMVALVASLLITLHSIE), 154–174 (GTMLAAASMAMAAYVFALPLF), 182–202 (LAEFAWRLAPMAVEFVCIVLI), 216–236 (ALPGALLAVILMEIVKWGFGF), and 250–270 (ALSALPILLLWIYLSWVSVLL).

The protein belongs to the UPF0761 family.

The protein resides in the cell inner membrane. The sequence is that of UPF0761 membrane protein XC_3370 from Xanthomonas campestris pv. campestris (strain 8004).